Reading from the N-terminus, the 625-residue chain is Vitamin B12 transporter BtuB (625 aa).

The first 21 residues, 1-21 (MTIKKYTLLTALSVTAFSGWA), serve as a signal peptide directing secretion. The TonB box motif lies at 31 to 38 (DEMVVTAN). The 115-residue stretch at 43–157 (PKSSVLAPVD…IGGVINILTG (115 aa)) folds into the TBDR plug domain. Cyanocob(III)alamin is bound by residues serine 90, asparagine 97, and 115–116 (IT). The TBDR beta-barrel domain maps to 160-625 (KPGTTLSAGL…EYYFTGSYNF (466 aa)). 3 consecutive transmembrane segments (beta stranded) span residues 163 to 170 (TTLSAGLG), 174 to 183 (YQTYDGSTQQ), and 189 to 200 (TTVTLAGNYTYS). Ca(2+)-binding residues include aspartate 204, glutamine 217, aspartate 219, and aspartate 221. 2 beta stranded membrane passes run 223–233 (FMGKMLWAGLE) and 238–254 (EQFN…NRSD). The Ca(2+) site is built by tyrosine 255, aspartate 256, and aspartate 269. 14 beta stranded membrane-spanning segments follow: residues 271–285 (RKLS…LRYK), 287–304 (GIYA…KDYN), 317–333 (SLDE…NTFQ), 336–345 (NGMISAGADW), 363–379 (FTQH…QQIS), 381–391 (VTLEGAVRSDD), 395–410 (FGWH…WEFI), 413–427 (YRLI…KAPN), 445–454 (ESKQWEGGVE), 460–469 (LTWRLSAYRN), 484–501 (YFNI…TGSF), 505–520 (PLSH…PRNA), 528–540 (RRAK…QLDW), and 546–561 (DWSV…YDKD). Serine 317 lines the cyanocob(III)alamin pocket. A cyanocob(III)alamin-binding site is contributed by arginine 528. Residue tyrosine 562 coordinates cyanocob(III)alamin. A run of 3 beta stranded transmembrane segments spans residues 569-583 (TVEL…LAVS), 596-607 (IANLFDKDYEMV), and 613-625 (PGRE…SYNF). The TonB C-terminal box motif lies at 608–625 (YGYQTPGREYYFTGSYNF).

Belongs to the TonB-dependent receptor family. BtuB (TC 1.B.14.3.1) subfamily.

The protein localises to the cell outer membrane. Its function is as follows. Involved in the active translocation of vitamin B12 (cyanocobalamin) across the outer membrane to the periplasmic space. It derives its energy for transport by interacting with the trans-periplasmic membrane protein TonB. The sequence is that of Vitamin B12 transporter BtuB from Yersinia pestis bv. Antiqua (strain Antiqua).